Reading from the N-terminus, the 130-residue chain is UPF0251 protein Swol_2090 (130 aa).

Belongs to the UPF0251 family.

This Syntrophomonas wolfei subsp. wolfei (strain DSM 2245B / Goettingen) protein is UPF0251 protein Swol_2090.